Reading from the N-terminus, the 697-residue chain is Alpha-1,4-glucan:maltose-1-phosphate maltosyltransferase (697 aa).

Residue Lys-284 coordinates alpha-maltose 1-phosphate. Residues 286 to 305 form a disordered region; sequence RNNSVTAAPGDVGSPWAIGS. Gln-344 and Asp-379 together coordinate alpha-maltose 1-phosphate. The active-site Nucleophile is the Asp-414. Asn-415 lines the alpha-maltose 1-phosphate pocket. The active-site Proton donor is Glu-443. 553–554 contributes to the alpha-maltose 1-phosphate binding site; the sequence is KY.

This sequence belongs to the glycosyl hydrolase 13 family. GlgE subfamily. As to quaternary structure, homodimer.

It carries out the reaction alpha-maltose 1-phosphate + [(1-&gt;4)-alpha-D-glucosyl](n) = [(1-&gt;4)-alpha-D-glucosyl](n+2) + phosphate. It functions in the pathway glycan biosynthesis; glycogen biosynthesis. Its activity is regulated as follows. The transfer reaction from maltose-1-P to glycogen is inhibited by micromolar amounts of inorganic phosphate or arsenate but is only slightly inhibited by millimolar concentrations of glucose-1-P, glucose-6-P, or inorganic pyrophosphate. Is also inhibited by ATP, by 1,4-dideoxy-1,4-imino-D-arabinitol (DIA), but not by isofagomine. Functionally, maltosyltransferase that uses maltose 1-phosphate (M1P) as the sugar donor to elongate linear or branched alpha-(1-&gt;4)-glucans. Is also able to catalyze the reverse reaction in vitro. Cannot use glucose 1-phosphate as substrate. Is involved in a branched alpha-glucan biosynthetic pathway from trehalose, together with TreS, Mak and GlgB. The chain is Alpha-1,4-glucan:maltose-1-phosphate maltosyltransferase (glgE) from Mycolicibacterium smegmatis (strain ATCC 700084 / mc(2)155) (Mycobacterium smegmatis).